The primary structure comprises 617 residues: Arrestin domain-containing protein B (617 aa).

In terms of domain architecture, C2 spans 1-109 (MDNRGLRLFI…ATFGQTDKWL (109 aa)). Residues D20, D27, D76, D78, and D84 each coordinate Ca(2+).

It belongs to the arrestin family. It depends on Ca(2+) as a cofactor.

This chain is Arrestin domain-containing protein B (adcB), found in Dictyostelium discoideum (Social amoeba).